The sequence spans 283 residues: ACT domain-containing protein DS12, chloroplastic (283 aa).

The transit peptide at 1-56 directs the protein to the chloroplast; that stretch reads MAEMAVTAALRPCSGVSPAVSGTSHRRRRPAAWRALAPPPPHAGLRLSSPAVRVPR. The interval 14 to 78 is disordered; the sequence is SGVSPAVSGT…SNTDTVPTPK (65 aa). Low complexity predominate over residues 48 to 63; that stretch reads SSPAVRVPRAASSAAV. 2 ACT domains span residues 91-171 and 206-276; these read IVEI…ASSQ and LLVV…LRRP.

Its subcellular location is the plastid. It localises to the chloroplast. The polypeptide is ACT domain-containing protein DS12, chloroplastic (Oryza sativa subsp. indica (Rice)).